Consider the following 160-residue polypeptide: Cytochrome b6-f complex subunit 4 (160 aa).

The next 3 helical transmembrane spans lie at Leu-36–Val-56, Leu-95–Glu-115, and Thr-131–Ile-151.

Belongs to the cytochrome b family. PetD subfamily. As to quaternary structure, the 4 large subunits of the cytochrome b6-f complex are cytochrome b6, subunit IV (17 kDa polypeptide, petD), cytochrome f and the Rieske protein, while the 4 small subunits are petG, petL, petM and petN. The complex functions as a dimer.

It is found in the plastid. It localises to the chloroplast thylakoid membrane. In terms of biological role, component of the cytochrome b6-f complex, which mediates electron transfer between photosystem II (PSII) and photosystem I (PSI), cyclic electron flow around PSI, and state transitions. In Spirogyra maxima (Green alga), this protein is Cytochrome b6-f complex subunit 4.